The chain runs to 456 residues: Bifunctional protein GlmU (456 aa).

The interval 1–229 (MLNVVILAAG…GWETLGVNSR (229 aa)) is pyrophosphorylase. UDP-N-acetyl-alpha-D-glucosamine is bound by residues 7–10 (LAAG), lysine 21, glutamine 73, 78–79 (GT), 103–105 (YGD), glycine 139, glutamate 154, asparagine 169, and asparagine 227. Mg(2+) is bound at residue aspartate 105. Residue asparagine 227 participates in Mg(2+) binding. The linker stretch occupies residues 230 to 250 (VQQAELERRWQQEQARRQLEA). Residues 251 to 456 (GVTLADPARF…EGWQRPQKKS (206 aa)) form an N-acetyltransferase region. UDP-N-acetyl-alpha-D-glucosamine-binding residues include arginine 333 and lysine 351. Catalysis depends on histidine 363, which acts as the Proton acceptor. Positions 366 and 377 each coordinate UDP-N-acetyl-alpha-D-glucosamine. Acetyl-CoA is bound by residues alanine 380, 386–387 (NY), serine 405, alanine 423, and arginine 440.

It in the N-terminal section; belongs to the N-acetylglucosamine-1-phosphate uridyltransferase family. In the C-terminal section; belongs to the transferase hexapeptide repeat family. Homotrimer. Mg(2+) serves as cofactor.

It is found in the cytoplasm. The catalysed reaction is alpha-D-glucosamine 1-phosphate + acetyl-CoA = N-acetyl-alpha-D-glucosamine 1-phosphate + CoA + H(+). It catalyses the reaction N-acetyl-alpha-D-glucosamine 1-phosphate + UTP + H(+) = UDP-N-acetyl-alpha-D-glucosamine + diphosphate. Its pathway is nucleotide-sugar biosynthesis; UDP-N-acetyl-alpha-D-glucosamine biosynthesis; N-acetyl-alpha-D-glucosamine 1-phosphate from alpha-D-glucosamine 6-phosphate (route II): step 2/2. It participates in nucleotide-sugar biosynthesis; UDP-N-acetyl-alpha-D-glucosamine biosynthesis; UDP-N-acetyl-alpha-D-glucosamine from N-acetyl-alpha-D-glucosamine 1-phosphate: step 1/1. The protein operates within bacterial outer membrane biogenesis; LPS lipid A biosynthesis. In terms of biological role, catalyzes the last two sequential reactions in the de novo biosynthetic pathway for UDP-N-acetylglucosamine (UDP-GlcNAc). The C-terminal domain catalyzes the transfer of acetyl group from acetyl coenzyme A to glucosamine-1-phosphate (GlcN-1-P) to produce N-acetylglucosamine-1-phosphate (GlcNAc-1-P), which is converted into UDP-GlcNAc by the transfer of uridine 5-monophosphate (from uridine 5-triphosphate), a reaction catalyzed by the N-terminal domain. In Bordetella petrii (strain ATCC BAA-461 / DSM 12804 / CCUG 43448), this protein is Bifunctional protein GlmU.